The following is a 185-amino-acid chain: Deoxyuridine 5'-triphosphate nucleotidohydrolase (185 aa).

A disordered region spans residues Met1–Gln23. Residues Arg95–Gly97, Asn108, Thr112–Asp114, and Lys122 each bind substrate. The interval Asp160 to Asp185 is disordered. Gly residues predominate over residues Gly175–Asp185.

The protein belongs to the dUTPase family. Requires Mg(2+) as cofactor.

The catalysed reaction is dUTP + H2O = dUMP + diphosphate + H(+). The protein operates within pyrimidine metabolism; dUMP biosynthesis; dUMP from dCTP (dUTP route): step 2/2. In terms of biological role, this enzyme is involved in nucleotide metabolism: it produces dUMP, the immediate precursor of thymidine nucleotides and it decreases the intracellular concentration of dUTP so that uracil cannot be incorporated into DNA. The sequence is that of Deoxyuridine 5'-triphosphate nucleotidohydrolase from Bartonella quintana (strain Toulouse) (Rochalimaea quintana).